We begin with the raw amino-acid sequence, 468 residues long: Uronate isomerase (468 aa).

Belongs to the metallo-dependent hydrolases superfamily. Uronate isomerase family.

The enzyme catalyses D-glucuronate = D-fructuronate. The catalysed reaction is aldehydo-D-galacturonate = keto-D-tagaturonate. It participates in carbohydrate metabolism; pentose and glucuronate interconversion. This chain is Uronate isomerase, found in Marinomonas sp. (strain MWYL1).